A 213-amino-acid chain; its full sequence is Redox-sensing transcriptional repressor Rex (213 aa).

Positions 16-55 (IYYRYLRLLSNSGKNRVSSTELAEAVKVDSATIRRDFSYF) form a DNA-binding region, H-T-H motif. 90-95 (GVGNLG) serves as a coordination point for NAD(+).

This sequence belongs to the transcriptional regulatory Rex family. As to quaternary structure, homodimer.

Its subcellular location is the cytoplasm. In terms of biological role, modulates transcription in response to changes in cellular NADH/NAD(+) redox state. This is Redox-sensing transcriptional repressor Rex from Ligilactobacillus salivarius (strain UCC118) (Lactobacillus salivarius).